A 197-amino-acid chain; its full sequence is Large ribosomal subunit protein bL25 (197 aa).

The protein belongs to the bacterial ribosomal protein bL25 family. CTC subfamily. In terms of assembly, part of the 50S ribosomal subunit; part of the 5S rRNA/L5/L18/L25 subcomplex. Contacts the 5S rRNA. Binds to the 5S rRNA independently of L5 and L18.

This is one of the proteins that binds to the 5S RNA in the ribosome where it forms part of the central protuberance. The protein is Large ribosomal subunit protein bL25 of Pseudomonas putida (strain GB-1).